The following is a 1937-amino-acid chain: Myosin-8 (1937 aa).

A Myosin N-terminal SH3-like domain is found at 35–84 (DAKTSVFVAEPKESYVKSTIQSKEGGKVTVKTEGGATLTVREDQVFPMNP). Thr-66 and Thr-71 each carry phosphothreonine. A Myosin motor domain is found at 88–781 (DKIEDMAMMT…LLGLLEEMRD (694 aa)). Lys-132 bears the N6,N6,N6-trimethyllysine mark. 181-188 (GESGAGKT) contacts ATP. A Phosphotyrosine modification is found at Tyr-389. Ser-392 is modified (phosphoserine). Phosphothreonine is present on Thr-419. A Phosphotyrosine modification is found at Tyr-424. Residue Ser-625 is modified to Phosphoserine. The tract at residues 658–680 (LNKLMTNLRSTHPHFVRCIIPNE) is actin-binding. His-756 carries the post-translational modification Pros-methylhistidine. The segment at 760–774 (KFGHTKVFFKAGLLG) is actin-binding. Residues 781–813 (DEKLAQIITRTQAVCRGFLMRVEYQKMLQRREA) enclose the IQ domain. Residues 842–1937 (LLKSAETEKE…REVHTKISAE (1096 aa)) are a coiled coil. Phosphoserine is present on residues Ser-1091 and Ser-1095. The tract at residues 1126–1146 (EAERASRAKAEKQRSDLSREL) is disordered. Positions 1127–1146 (AERASRAKAEKQRSDLSREL) are enriched in basic and acidic residues. Ser-1161, Ser-1236, Ser-1242, and Ser-1260 each carry phosphoserine. 2 positions are modified to phosphothreonine: Thr-1264 and Thr-1285. Ser-1291, Ser-1302, and Ser-1305 each carry phosphoserine. Residue Tyr-1463 is modified to Phosphotyrosine. At Thr-1466 the chain carries Phosphothreonine. The residue at position 1473 (Ser-1473) is a Phosphoserine. Tyr-1491 carries the post-translational modification Phosphotyrosine. Ser-1494 is modified (phosphoserine). A Phosphothreonine modification is found at Thr-1500. Residue Ser-1513 is modified to Phosphoserine. Thr-1516 carries the phosphothreonine modification. Phosphoserine is present on residues Ser-1553, Ser-1573, Ser-1602, Ser-1713, and Ser-1725. Residue Thr-1729 is modified to Phosphothreonine. The residue at position 1738 (Ser-1738) is a Phosphoserine.

It belongs to the TRAFAC class myosin-kinesin ATPase superfamily. Myosin family. In terms of assembly, muscle myosin is a hexameric protein that consists of 2 heavy chain subunits (MHC), 2 alkali light chain subunits (MLC) and 2 regulatory light chain subunits (MLC-2).

Its subcellular location is the cytoplasm. It is found in the myofibril. Its function is as follows. Muscle contraction. In Homo sapiens (Human), this protein is Myosin-8 (MYH8).